An 82-amino-acid polypeptide reads, in one-letter code: Putative defensin-like protein 70 (82 aa).

The signal sequence occupies residues Met-1 to Gly-27. Cystine bridges form between Cys-39-Cys-80, Cys-43-Cys-66, Cys-52-Cys-78, and Cys-56-Cys-79.

The protein belongs to the DEFL family.

It is found in the secreted. This is Putative defensin-like protein 70 (LCR83) from Arabidopsis thaliana (Mouse-ear cress).